The sequence spans 638 residues: Cell division control protein 45 homolog (638 aa).

The tract at residues 151-204 is disordered; sequence ELSDEENSDSSNEREEEVEDDNRSVESYSSSDYQARSRRRFSEETTQRRAEIKE. The span at 153–170 shows a compositional bias: acidic residues; it reads SDEENSDSSNEREEEVED. The span at 190-204 shows a compositional bias: basic and acidic residues; the sequence is RFSEETTQRRAEIKE.

The protein belongs to the CDC45 family. As to quaternary structure, interacts with sld3.

The protein resides in the nucleus. Its function is as follows. Required for initiation of chromosomal DNA replication. May have a role in regulating the MCM proteins nda1 and nda4. This chain is Cell division control protein 45 homolog (sna41), found in Schizosaccharomyces pombe (strain 972 / ATCC 24843) (Fission yeast).